Consider the following 140-residue polypeptide: uncharacterized protein (140 aa).

The interval 34–88 is disordered; that stretch reads PLRWRNRARNREKPHSPRAVSSPATHSLPPSNPCRLTPTLSSARPREGSCPSKCS.

In terms of tissue distribution, expressed in a range of cell lines, including B-cell lymphoma and prostate.

This is an uncharacterized protein from Homo sapiens (Human).